Here is a 122-residue protein sequence, read N- to C-terminus: Basic phospholipase A2 10 (122 aa).

7 disulfides stabilise this stretch: Cys-26-Cys-114, Cys-28-Cys-43, Cys-42-Cys-94, Cys-48-Cys-122, Cys-49-Cys-87, Cys-56-Cys-80, and Cys-74-Cys-85. Ca(2+) is bound by residues Tyr-27, Gly-29, and Gly-31. Residue His-46 is part of the active site. Asp-47 contributes to the Ca(2+) binding site. Asp-88 is an active-site residue.

Ca(2+) is required as a cofactor. In terms of tissue distribution, expressed by the venom gland.

The protein localises to the secreted. It catalyses the reaction a 1,2-diacyl-sn-glycero-3-phosphocholine + H2O = a 1-acyl-sn-glycero-3-phosphocholine + a fatty acid + H(+). Inhibited by chemical modifications mediated by p-BPB, anhydrous acetic acid and NBSF. In terms of biological role, snake venom phospholipase A2 (PLA2) that has a strong dose-dependent anticoagulant effect. In vivo, intramuscular and intervenal injection causes muscle necrosis. Induces moderate edema in the mouse foot pad. PLA2 catalyzes the calcium-dependent hydrolysis of the 2-acyl groups in 3-sn-phosphoglycerides. The protein is Basic phospholipase A2 10 of Crotalus durissus cumanensis (South American rattlesnake).